Reading from the N-terminus, the 118-residue chain is Large ribosomal subunit protein uL18 (118 aa).

This sequence belongs to the universal ribosomal protein uL18 family. In terms of assembly, part of the 50S ribosomal subunit; part of the 5S rRNA/L5/L18/L25 subcomplex. Contacts the 5S and 23S rRNAs.

In terms of biological role, this is one of the proteins that bind and probably mediate the attachment of the 5S RNA into the large ribosomal subunit, where it forms part of the central protuberance. The protein is Large ribosomal subunit protein uL18 of Levilactobacillus brevis (strain ATCC 367 / BCRC 12310 / CIP 105137 / JCM 1170 / LMG 11437 / NCIMB 947 / NCTC 947) (Lactobacillus brevis).